The chain runs to 212 residues: Peptide methionine sulfoxide reductase MsrA (212 aa).

Residue cysteine 52 is part of the active site.

The protein belongs to the MsrA Met sulfoxide reductase family.

It catalyses the reaction L-methionyl-[protein] + [thioredoxin]-disulfide + H2O = L-methionyl-(S)-S-oxide-[protein] + [thioredoxin]-dithiol. It carries out the reaction [thioredoxin]-disulfide + L-methionine + H2O = L-methionine (S)-S-oxide + [thioredoxin]-dithiol. Functionally, has an important function as a repair enzyme for proteins that have been inactivated by oxidation. Catalyzes the reversible oxidation-reduction of methionine sulfoxide in proteins to methionine. The protein is Peptide methionine sulfoxide reductase MsrA of Escherichia coli O6:K15:H31 (strain 536 / UPEC).